A 704-amino-acid chain; its full sequence is Preterpestacin I synthase tpcA (704 aa).

The tract at residues 1-329 (MEQLSYQSKL…CSACPRQNAW (329 aa)) is terpene cyclase. Asp-96 provides a ligand contact to Mg(2+). Residues Asp-96, Asn-231, 235 to 239 (SWERE), and 325 to 326 (RQ) each bind substrate. The short motif at 96-100 (DDGGE) is the DDXXD 1 element. An NSE/DTE motif is present at residues 231–239 (NDYFSWERE). Residues 330-688 (KDMSSQSLNG…MLRLCLAKLS (359 aa)) form a prenyltransferase region. Residues 361–380 (KDSSFFGSQPSDDEPSLSEV) are disordered. Isopentenyl diphosphate contacts are provided by Lys-406, Arg-409, and His-438. 2 residues coordinate Mg(2+): Asp-445 and Asp-449. The DDXXD 2 motif lies at 445–449 (DDLED). Residue Arg-454 coordinates dimethylallyl diphosphate. Arg-455 provides a ligand contact to isopentenyl diphosphate. Dimethylallyl diphosphate-binding residues include Lys-532, Thr-533, Gln-568, Asn-575, Lys-583, and Lys-593.

In the N-terminal section; belongs to the terpene synthase family. The protein in the C-terminal section; belongs to the FPP/GGPP synthase family. Hexamer. Mg(2+) is required as a cofactor.

The enzyme catalyses isopentenyl diphosphate + (2E,6E)-farnesyl diphosphate = (2E,6E,10E)-geranylgeranyl diphosphate + diphosphate. The catalysed reaction is isopentenyl diphosphate + (2E,6E,10E)-geranylgeranyl diphosphate = (2E,6E,10E,14E)-geranylfarnesyl diphosphate + diphosphate. It functions in the pathway secondary metabolite biosynthesis; terpenoid biosynthesis. In terms of biological role, bifunctional terpene synthase; part of the gene cluster that mediates the biosynthesis of terpestacin. The bifunctional terpene synthase tpcA converts isopentenyl diphosphate (IPP) and dimethylallyl diphosphate (DMAPP) into the sesterterpene preterpestacin I. The C-terminal prenyltransferase (PT) domain of tpcA catalyzes formation of GFPP, whereas the N-terminal terpene cyclase (TC) domain catalyzes the cyclization of GFPP into preterpestacin I. The cytochrome P450 monooxygenase tpcB then hydroxylates preterpestacin I to yield 24-hydroxypreterpstacin I (renamed as preterpestacin II) whereas the cytochrome P450 monooxygenase tpcC further hydroxylates preterpestacin II to yield 16,17-dihydroxypreterpestacin II (renamed as preterpestacin III). Finally, the FAD-dependent monooxygenase tpcD converts preterpestacin III into terpestacin. The protein is Preterpestacin I synthase tpcA of Cochliobolus heterostrophus (strain C5 / ATCC 48332 / race O) (Southern corn leaf blight fungus).